The sequence spans 277 residues: uncharacterized protein (277 aa).

5 consecutive transmembrane segments (helical) span residues 46–66 (IAAI…YGGL), 73–93 (LFEG…ILWM), 143–163 (TTVI…VLIL), 174–194 (FFYA…GYGT), and 228–248 (KGLI…MEWV).

The protein belongs to the oxidase-dependent Fe transporter (OFeT) (TC 9.A.10.1) family.

Its subcellular location is the cell membrane. This is an uncharacterized protein from Archaeoglobus fulgidus (strain ATCC 49558 / DSM 4304 / JCM 9628 / NBRC 100126 / VC-16).